Here is a 294-residue protein sequence, read N- to C-terminus: Protein C3orf33 (294 aa).

Residue A2 is modified to N-acetylalanine. The chain crosses the membrane as a helical span at residues 40 to 56 (ISTGMAIAGIMLLLRSI).

Highly expressed in ileocecal tissue and endometrium.

It localises to the membrane. The protein localises to the secreted. In terms of biological role, secreted protein may play a role in transcription regulation via the MAPK3/MAPK1 pathway through an unidentified receptor on the plasma membrane. This Homo sapiens (Human) protein is Protein C3orf33 (C3orf33).